Reading from the N-terminus, the 432-residue chain is Enolase 2 (432 aa).

Residue Gln-163 coordinates (2R)-2-phosphoglycerate. The active-site Proton donor is Glu-205. Mg(2+) is bound by residues Asp-242, Glu-287, and Asp-314. (2R)-2-phosphoglycerate is bound by residues Lys-339, Arg-368, Ser-369, and Lys-390. The Proton acceptor role is filled by Lys-339.

Belongs to the enolase family. In terms of assembly, homodimer. Probably forms octamers. Mg(2+) is required as a cofactor.

The protein resides in the cytoplasm. Its subcellular location is the secreted. It is found in the cell surface. It catalyses the reaction (2R)-2-phosphoglycerate = phosphoenolpyruvate + H2O. It participates in carbohydrate degradation; glycolysis; pyruvate from D-glyceraldehyde 3-phosphate: step 4/5. Its function is as follows. Catalyzes the reversible conversion of 2-phosphoglycerate (2-PG) into phosphoenolpyruvate (PEP). It is essential for the degradation of carbohydrates via glycolysis. In Lactobacillus gasseri (strain ATCC 33323 / DSM 20243 / BCRC 14619 / CIP 102991 / JCM 1131 / KCTC 3163 / NCIMB 11718 / NCTC 13722 / AM63), this protein is Enolase 2.